Consider the following 199-residue polypeptide: MSNIVWHDHKVTRAERSANKNQKPCLLWFTGLSGSGKSTIANALDVALHERGYHTFLLDGDNVRHGLCSDLGFSDDDRVENIRRVGEVCKLFADAGLIVMSAFISPFTSDRRMVRKLFPAGEFIEVFMDAPLETCESRDPKGLYKKARAGEIKHFTGIDSPYEVPSHPEIRLDTSQSTVDECVDSLIAYLQERELIKSN.

Position 31–38 (31–38 (GLSGSGKS)) interacts with ATP. Ser105 (phosphoserine intermediate) is an active-site residue.

The protein belongs to the APS kinase family.

It carries out the reaction adenosine 5'-phosphosulfate + ATP = 3'-phosphoadenylyl sulfate + ADP + H(+). It functions in the pathway sulfur metabolism; hydrogen sulfide biosynthesis; sulfite from sulfate: step 2/3. Functionally, catalyzes the synthesis of activated sulfate. This chain is Adenylyl-sulfate kinase, found in Marinobacter nauticus (strain ATCC 700491 / DSM 11845 / VT8) (Marinobacter aquaeolei).